The sequence spans 75 residues: Dermaseptin-SP4 (75 aa).

A signal peptide spans 1 to 22; it reads MAFLKKSLFLVLFLGLVSLSMC. Residues 23 to 45 constitute a propeptide that is removed on maturation; it reads EEEKRENEVEEEQEDDEQSELRR. A Proline amide modification is found at proline 72. A propeptide spanning residues 74-75 is cleaved from the precursor; that stretch reads EQ.

Belongs to the frog skin active peptide (FSAP) family. Dermaseptin subfamily. As to expression, expressed by the skin glands.

The protein resides in the secreted. Its subcellular location is the target cell membrane. In terms of biological role, antimicrobial peptide with activity against Gram-positive and Gram-negative bacteria and fungi. Has been tested against E.coli (MIC=47.25-128 uM), S.aureus (MIC=189-512 uM), K.pneumoniae (MIC=189 uM) and C.albicans (MIC&gt;189 uM). Probably acts by disturbing membrane functions with its alpha-helical amphipathic structure. May penetrate bacterial membranes, but stay at the mammalian membrane surface. Shows a weak hemolytic activity. This is Dermaseptin-SP4 from Agalychnis spurrelli (Gliding leaf frog).